Here is a 192-residue protein sequence, read N- to C-terminus: Phosphomevalonate kinase (192 aa).

ATP-binding positions include 17-23 (KRKSGKD) and Arg141. Asn170 contributes to the substrate binding site. His171 and Gln180 together coordinate ATP.

As to quaternary structure, monomer.

Its subcellular location is the cytoplasm. The protein localises to the cytosol. The enzyme catalyses (R)-5-phosphomevalonate + ATP = (R)-5-diphosphomevalonate + ADP. The protein operates within isoprenoid biosynthesis; isopentenyl diphosphate biosynthesis via mevalonate pathway; isopentenyl diphosphate from (R)-mevalonate: step 2/3. In terms of biological role, catalyzes the reversible ATP-dependent phosphorylation of mevalonate 5-phosphate to produce mevalonate diphosphate and ADP, a key step in the mevalonic acid mediated biosynthesis of isopentenyl diphosphate and other polyisoprenoid metabolites. In Bos taurus (Bovine), this protein is Phosphomevalonate kinase (PMVK).